Consider the following 84-residue polypeptide: Toxin BmKaTx16 (84 aa).

A signal peptide spans 1–19 (MNYLVMISFALLLMTGVES). Residues 21–83 (RDAYIAKPHN…VPIRVPGKCH (63 aa)) form the LCN-type CS-alpha/beta domain. 4 disulfide bridges follow: Cys31–Cys82, Cys35–Cys55, Cys41–Cys65, and Cys45–Cys67. Arg84 is a propeptide (removed by a carboxypeptidase).

The protein belongs to the long (4 C-C) scorpion toxin superfamily. Sodium channel inhibitor family. Alpha subfamily. Expressed by the venom gland.

The protein localises to the secreted. Its function is as follows. Alpha toxins bind voltage-independently at site-3 of sodium channels (Nav) and inhibit the inactivation of the activated channels, thereby blocking neuronal transmission. This chain is Toxin BmKaTx16, found in Olivierus martensii (Manchurian scorpion).